The following is a 141-amino-acid chain: Lutropin subunit beta (141 aa).

The signal sequence occupies residues 1 to 20; sequence MEMLQGLLLWLLLSVGGVWA. 6 disulfide bridges follow: Cys29–Cys77, Cys43–Cys92, Cys46–Cys130, Cys54–Cys108, Cys58–Cys110, and Cys113–Cys120. An N-linked (GlcNAc...) asparagine glycan is attached at Asn33.

It belongs to the glycoprotein hormones subunit beta family. As to quaternary structure, heterodimer of a common alpha chain and a unique beta chain which confers biological specificity to thyrotropin, lutropin, follitropin and gonadotropin.

It is found in the secreted. Its function is as follows. Promotes spermatogenesis and ovulation by stimulating the testes and ovaries to synthesize steroids. This is Lutropin subunit beta (LHB1) from Ceratotherium simum (White rhinoceros).